A 2294-amino-acid chain; its full sequence is Reducing polyketide synthase BOA9 (2294 aa).

The 406-residue stretch at 4 to 409 folds into the Ketosynthase family 3 (KS3) domain; that stretch reads PEPVAIIGMG…GANATAIVEA (406 aa). The segment at 537 to 853 is malonyl-CoA:ACP transacylase (MAT) domain; that stretch reads IFTGQGAQNA…DYAATLVRGQ (317 aa). The For malonyltransferase activity role is filled by Ser-630. Residues 930–1067 form an N-terminal hotdog fold region; the sequence is HDLLGAILPG…GTVTKKKAVT (138 aa). The dehydratase (DH) domain stretch occupies residues 930–1104; it reads HDLLGAILPG…LNYGPAFNGL (175 aa). The region spanning 930–1236 is the PKS/mFAS DH domain; sequence HDLLGAILPG…CTQYSEALDD (307 aa). His-962 functions as the Proton acceptor; for dehydratase activity in the catalytic mechanism. Residues 1078–1236 form a C-terminal hotdog fold region; it reads QEPKAARTWY…CTQYSEALDD (159 aa). Residue Asp-1142 is the Proton donor; for dehydratase activity of the active site. Residues 1618 to 1908 are enoyl reductase (ER) domain; the sequence is GIFDTIHFKD…KNSRIGRVVV (291 aa). A ketoreductase (KR) domain region spans residues 1934–2107; sequence VHTYLLGVLE…LPATTISLTV (174 aa). Residues 2214–2292 enclose the Carrier domain; the sequence is LLLPDILEMI…SLAKKIYDIR (79 aa). At Ser-2251 the chain carries O-(pantetheine 4'-phosphoryl)serine.

It functions in the pathway polyketide biosynthesis. In terms of biological role, reducing polyketide synthase; part of the gene cluster B that mediates the biosynthesis of botcinic acid and its botcinin derivatives, acetate-derived polyketides that contribute to virulence when combined with the sesquiterpene botrydial. Botcinic acid and its derivatives have been shown to induce chlorosis and necrosis during host plant infection, but also have antifungal activities. Two polyketide synthases, BOA6 and BOA9, are involved in the biosynthesis of botcinins. BOA6 mediates the formation of the per-methylated tetraketide core by condensation of four units of malonyl-CoA with one unit of acetyl-CoA, which would be methylated in activated methylene groups to yield a bicyclic acid intermediate that could then either be converted to botrylactone derivatives or lose the starter acetate unit through a retro-Claisen type C-C bond cleavage to yield botcinin derivatives. The second polyketide synthase, BOA9, is probably required for the biosynthesis of the tetraketide side chain of botcinins. The methyltransferase (MT) domain within BOA6 is probably responsible for the incorporation of four methyl groups. The trans-enoyl reductase BOA5 might take over the enoyl reductase function of BOA6 that misses an ER domain. The monooxygenases BOA2, BOA3 and BOA4 might be involved in further hydroxylations at C4, C5 and C8, whereas BOA7, close to BOA9, could potentially be involved in the hydroxylation at C4 in the side chain of botcinins. This chain is Reducing polyketide synthase BOA9, found in Botryotinia fuckeliana (strain B05.10) (Noble rot fungus).